The primary structure comprises 803 residues: Leucine--tRNA ligase (803 aa).

Positions 40–51 (PYPSGQGLHVGH) match the 'HIGH' region motif. The 'KMSKS' region motif lies at 575 to 579 (KMSKS). Lys578 contributes to the ATP binding site.

The protein belongs to the class-I aminoacyl-tRNA synthetase family.

Its subcellular location is the cytoplasm. It carries out the reaction tRNA(Leu) + L-leucine + ATP = L-leucyl-tRNA(Leu) + AMP + diphosphate. The chain is Leucine--tRNA ligase from Lacticaseibacillus paracasei (strain ATCC 334 / BCRC 17002 / CCUG 31169 / CIP 107868 / KCTC 3260 / NRRL B-441) (Lactobacillus paracasei).